Consider the following 278-residue polypeptide: Undecaprenyl-diphosphatase 1 (278 aa).

7 helical membrane passes run 46–66 (VVGF…VYFF), 91–111 (YTFT…GLAA), 119–139 (LASL…MWFA), 153–173 (SLPD…FPGF), 191–211 (VAAT…AGLY), 225–245 (PLAV…AWLL), and 256–276 (FIIY…GGAI).

This sequence belongs to the UppP family.

The protein resides in the cell membrane. The catalysed reaction is di-trans,octa-cis-undecaprenyl diphosphate + H2O = di-trans,octa-cis-undecaprenyl phosphate + phosphate + H(+). Its function is as follows. Catalyzes the dephosphorylation of undecaprenyl diphosphate (UPP). Confers resistance to bacitracin. The sequence is that of Undecaprenyl-diphosphatase 1 from Frankia alni (strain DSM 45986 / CECT 9034 / ACN14a).